The sequence spans 109 residues: Ycf20-like protein (109 aa).

The protein belongs to the ycf20 family.

The chain is Ycf20-like protein from Synechocystis sp. (strain ATCC 27184 / PCC 6803 / Kazusa).